A 239-amino-acid polypeptide reads, in one-letter code: MLLHLPLAELEVGHHLYWQIGNLNIHGQVFLSSWIVIGALLAVVVLGTRKMERDPRGVQNLLEFLWDYLRDLARDQIGEKVYRDWLPFIGTLFLFIFVSNWGGALIPWRIVHLPSGELGAPTADINTTVAMALLVSLAFFYAGLSNKGLKFFEYYVEPTPIMLPFKIIEEFTKPLSLSFRLFGNILADELAVAVLASLVPLLVPLPVMLLGLFTSAIQALIFATLAAFYIGEAVHEEAH.

A run of 5 helical transmembrane segments spans residues 27-47 (GQVFLSSWIVIGALLAVVVLG), 86-106 (LPFIGTLFLFIFVSNWGGALI), 125-145 (INTTVAMALLVSLAFFYAGLS), 190-210 (LAVAVLASLVPLLVPLPVMLL), and 211-231 (GLFTSAIQALIFATLAAFYIG).

This sequence belongs to the ATPase A chain family. F-type ATPases have 2 components, CF(1) - the catalytic core - and CF(0) - the membrane proton channel. CF(1) has five subunits: alpha(3), beta(3), gamma(1), delta(1), epsilon(1). CF(0) has four main subunits: a, b, b' and c.

It is found in the cellular thylakoid membrane. Its function is as follows. Key component of the proton channel; it plays a direct role in the translocation of protons across the membrane. The chain is ATP synthase subunit a from Synechococcus sp. (strain RCC307).